Here is a 364-residue protein sequence, read N- to C-terminus: Selection and upkeep of intraepithelial T-cells protein 11 (364 aa).

Residues 1-28 form the signal peptide; it reads MEPSASCLPGFFMVCILLKITVLTQVMS. Positions 29 to 118 constitute an Ig-like V-type domain; that stretch reads LDIQINTQIP…TNQEKRRSII (90 aa). The Extracellular segment spans residues 29–138; it reads LDIQINTQIP…MSLMSNNLLY (110 aa). The cysteines at positions 48 and 102 are disulfide-linked. Residues 139–159 form a helical membrane-spanning segment; it reads LGIYLIFILFLNFLKGILFCL. Residues 160-186 are Cytoplasmic-facing; it reads TKRLVHFRKRMIKIKKVWSNKTRACCP. Residues 187-207 traverse the membrane as a helical segment; it reads LIWEFLEIVLFIAFLPLYLMF. At 208 to 230 the chain is on the extracellular side; sequence RIRVFTLDEAHILYNNWLWKVCK. Residues 231–251 traverse the membrane as a helical segment; the sequence is TLIAMMILFTVLILFLLWTLN. At 252–364 the chain is on the cytoplasmic side; sequence RYGKMPCLSS…LYSKLGNLTH (113 aa).

The protein belongs to the SKINT family. Expressed in skin and thymus.

Its subcellular location is the membrane. In terms of biological role, may act by engaging a cell surface molecule on immature T-cells in the embryonic thymus. This chain is Selection and upkeep of intraepithelial T-cells protein 11 (Skint11), found in Mus musculus (Mouse).